The chain runs to 3381 residues: Versican core protein (3381 aa).

Positions 1 to 20 (MLINIKSILWMCSTLIAAHA) are cleaved as a signal peptide. One can recognise an Ig-like V-type domain in the interval 21-147 (LQKVNMEKSP…EDTQDTVSLT (127 aa)). 5 disulfide bridges follow: cysteine 44-cysteine 131, cysteine 173-cysteine 244, cysteine 197-cysteine 218, cysteine 271-cysteine 346, and cysteine 295-cysteine 316. Asparagine 57 carries N-linked (GlcNAc...) asparagine glycosylation. 2 consecutive Link domains span residues 151 to 246 (VVFH…YCYV) and 252 to 348 (DVFH…YCFK). Asparagine 331 and asparagine 352 each carry an N-linked (GlcNAc...) asparagine glycan. Residues 349–1336 (PKQNISEATT…IIEVRENKTG (988 aa)) are GAG-alpha (glucosaminoglycan attachment domain). Positions 417 to 427 (PLTSTHRSATE) are enriched in polar residues. Disordered regions lie at residues 417 to 437 (PLTSTHRSATESLPPDGSMKK) and 603 to 623 (ESVSASTIVSPDSDGSPMDHR). A glycan (O-linked (Xyl...) (chondroitin sulfate) serine) is linked at serine 660. Positions 816–866 (DNTTSKPLGSTEHVGSPKLPPALITTTGVSGKDKEMPSLTEDGRDEFTRIP) are disordered. Residue asparagine 817 is glycosylated (N-linked (GlcNAc...) asparagine). Basic and acidic residues predominate over residues 846–863 (GKDKEMPSLTEDGRDEFT). 2 N-linked (GlcNAc...) asparagine glycosylation sites follow: asparagine 965 and asparagine 1017. The segment covering 1043 to 1052 (EDFLWKEQTP) has biased composition (basic and acidic residues). 2 disordered regions span residues 1043 to 1081 (EDFLWKEQTPEKPVSPPSSTTDTAKETTPPLDEQESDGS) and 1218 to 1244 (FSSADRLHTPSASTEKPPLIDREPDEE). N-linked (GlcNAc...) asparagine glycosylation is present at asparagine 1333. Positions 1337-3074 (RMSDFSVSGH…VEGTAVYLPG (1738 aa)) are GAG-beta. Residues 1338-1362 (MSDFSVSGHPIDSESKEDEPCSEET) form a disordered region. Acidic residues predominate over residues 1352 to 1362 (SKEDEPCSEET). Asparagine 1393 is a glycosylation site (N-linked (GlcNAc...) asparagine). Basic and acidic residues predominate over residues 1417 to 1428 (KDPEAAEARRGQ). Disordered regions lie at residues 1417–1446 (KDPEAAEARRGQFESVAPSQNFSDSSESDS), 1455–1474 (GLPTAMQPNESKETTESLEI), and 1484–1512 (TAEPFSSGEPDIFPTASIHEGEATEGPDS). 2 N-linked (GlcNAc...) asparagine glycosylation sites follow: asparagine 1437 and asparagine 1463. O-linked (Xyl...) (chondroitin sulfate) serine glycosylation is found at serine 1539 and serine 1621. N-linked (GlcNAc...) asparagine glycosylation occurs at asparagine 1653. The disordered stretch occupies residues 1708–1785 (PPLEETTRKE…ERETTSSTVV (78 aa)). The segment covering 1712–1721 (ETTRKEEEKG) has biased composition (basic and acidic residues). Residues 1726-1738 (ASTVEVHSPTQRL) are compositionally biased toward polar residues. A compositionally biased stretch (low complexity) spans 1743 to 1761 (SPSELESSSETPPDDSAAA). The segment covering 1764-1784 (KSFTSQMTPTQSERETTSSTV) has biased composition (polar residues). 2 O-linked (Xyl...) (chondroitin sulfate) serine glycosylation sites follow: serine 1928 and serine 1952. The span at 1964–1976 (PSVTPTSDLSNHT) shows a compositional bias: polar residues. Disordered stretches follow at residues 1964-1986 (PSVTPTSDLSNHTADSEEPGSTL) and 2041-2126 (EGAI…QSSV). Asparagine 1974, asparagine 2045, asparagine 2074, and asparagine 2103 each carry an N-linked (GlcNAc...) asparagine glycan. Basic and acidic residues predominate over residues 2065–2075 (STEEGEVKENH). Serine 2109 carries the phosphoserine modification. O-linked (Xyl...) (chondroitin sulfate) serine glycosylation is found at serine 2240 and serine 2247. Asparagine 2263, asparagine 2290, and asparagine 2356 each carry an N-linked (GlcNAc...) asparagine glycan. Disordered stretches follow at residues 2338–2388 (EGPF…AETK), 2490–2512 (EQREGSPEATGTPASTASYEKAT), and 2594–2615 (TDLDPEVPSGPPDSSEESTQVQ). Polar residues-rich tracts occupy residues 2345 to 2357 (LTFSTGPGQPQNQ) and 2367 to 2383 (TSRPQPLTDQVSSENSV). Residues serine 2607 and serine 2608 each carry the phosphoserine modification. Threonine 2612 is modified (phosphothreonine). N-linked (GlcNAc...) asparagine glycans are attached at residues asparagine 2623 and asparagine 2641. Serine 2714, serine 2715, and serine 2759 each carry an O-linked (Xyl...) (chondroitin sulfate) serine glycan. Residues 2819-2893 (PPLSIHLGSG…EPSEDESKPK (75 aa)) form a disordered region. Over residues 2840-2851 (ALPSTDASTPPV) the composition is skewed to polar residues. Residues asparagine 2919 and asparagine 3052 are each glycosylated (N-linked (GlcNAc...) asparagine). Positions 3074–3110 (GPDRCKMNPCLNGGTCYPTETSYVCTCVPGYSGDRCE) constitute an EGF-like 1 domain. Disulfide bonds link cysteine 3078-cysteine 3089, cysteine 3083-cysteine 3098, cysteine 3100-cysteine 3109, cysteine 3116-cysteine 3127, cysteine 3121-cysteine 3136, cysteine 3138-cysteine 3147, cysteine 3154-cysteine 3165, cysteine 3182-cysteine 3274, cysteine 3250-cysteine 3266, cysteine 3281-cysteine 3324, and cysteine 3310-cysteine 3337. In terms of domain architecture, EGF-like 2; calcium-binding spans 3112–3148 (DFDECHSNPCRNGATCIDGFNTFRCLCLPSYVGALCE). In terms of domain architecture, C-type lectin spans 3161-3275 (FQGQCYKYFA…CNYHLTYTCK (115 aa)). Residues 3279-3339 (VACGQPPVVE…WAMPKITCLN (61 aa)) form the Sushi domain. N-linked (GlcNAc...) asparagine glycans are attached at residues asparagine 3354 and asparagine 3364. A compositionally biased stretch (polar residues) spans 3355–3365 (SSSAKDNSINT). The interval 3355–3381 (SSSAKDNSINTSKHDHRWSRRWQESRR) is disordered.

This sequence belongs to the aggrecan/versican proteoglycan family. Interacts with FBLN1. In terms of processing, phosphorylated by FAM20C in the extracellular medium. Proteolytically cleaved by ADAMTS5 and ADAMTS15 in the pericellular matrix surrounding myoblasts, facilitating myoblast contact and fusion which is required for skeletal muscle development and regeneration. As to expression, cerebral white matter. Isoform V0 and isoform V1 are expressed in the central nervous system, and in a number of mesenchymal and epithelial tissues; the major isoform V2 is restricted to the central nervous system.

Its subcellular location is the secreted. It is found in the extracellular space. The protein localises to the extracellular matrix. The protein resides in the cell projection. It localises to the cilium. Its subcellular location is the photoreceptor outer segment. It is found in the interphotoreceptor matrix. May play a role in intercellular signaling and in connecting cells with the extracellular matrix. May take part in the regulation of cell motility, growth and differentiation. Binds hyaluronic acid. This chain is Versican core protein (VCAN), found in Bos taurus (Bovine).